A 160-amino-acid polypeptide reads, in one-letter code: Cyclic pyranopterin monophosphate synthase (160 aa).

Substrate contacts are provided by residues 77 to 79 and 114 to 115; these read LCH and ME. The active site involves D129.

This sequence belongs to the MoaC family. In terms of assembly, homohexamer; trimer of dimers.

The catalysed reaction is (8S)-3',8-cyclo-7,8-dihydroguanosine 5'-triphosphate = cyclic pyranopterin phosphate + diphosphate. It functions in the pathway cofactor biosynthesis; molybdopterin biosynthesis. In terms of biological role, catalyzes the conversion of (8S)-3',8-cyclo-7,8-dihydroguanosine 5'-triphosphate to cyclic pyranopterin monophosphate (cPMP). The protein is Cyclic pyranopterin monophosphate synthase of Alcanivorax borkumensis (strain ATCC 700651 / DSM 11573 / NCIMB 13689 / SK2).